The following is a 224-amino-acid chain: Deoxyribose-phosphate aldolase (224 aa).

Asp-91 acts as the Proton donor/acceptor in catalysis. Residue Lys-152 is the Schiff-base intermediate with acetaldehyde of the active site. The active-site Proton donor/acceptor is the Lys-181.

Belongs to the DeoC/FbaB aldolase family. DeoC type 1 subfamily.

It is found in the cytoplasm. It carries out the reaction 2-deoxy-D-ribose 5-phosphate = D-glyceraldehyde 3-phosphate + acetaldehyde. It participates in carbohydrate degradation; 2-deoxy-D-ribose 1-phosphate degradation; D-glyceraldehyde 3-phosphate and acetaldehyde from 2-deoxy-alpha-D-ribose 1-phosphate: step 2/2. Its function is as follows. Catalyzes a reversible aldol reaction between acetaldehyde and D-glyceraldehyde 3-phosphate to generate 2-deoxy-D-ribose 5-phosphate. In Mycoplasma pneumoniae (strain ATCC 29342 / M129 / Subtype 1) (Mycoplasmoides pneumoniae), this protein is Deoxyribose-phosphate aldolase.